The primary structure comprises 233 residues: Lipoprotein-releasing system ATP-binding protein LolD (233 aa).

The ABC transporter domain maps to 6 to 233; the sequence is LQCDNLCKRY…TAELSLMGAE (228 aa). 42–49 is an ATP binding site; sequence GSSGSGKS.

It belongs to the ABC transporter superfamily. Lipoprotein translocase (TC 3.A.1.125) family. The complex is composed of two ATP-binding proteins (LolD) and two transmembrane proteins (LolC and LolE).

It localises to the cell inner membrane. In terms of biological role, part of the ABC transporter complex LolCDE involved in the translocation of mature outer membrane-directed lipoproteins, from the inner membrane to the periplasmic chaperone, LolA. Responsible for the formation of the LolA-lipoprotein complex in an ATP-dependent manner. This chain is Lipoprotein-releasing system ATP-binding protein LolD, found in Shigella dysenteriae serotype 1 (strain Sd197).